A 163-amino-acid chain; its full sequence is Phosphopantetheine adenylyltransferase (163 aa).

Position 11 (threonine 11) interacts with substrate. ATP contacts are provided by residues 11-12 and histidine 19; that span reads TF. Substrate-binding residues include lysine 43, leucine 75, and arginine 89. ATP is bound by residues 90–92, glutamate 100, and 125–131; these read GLR and YMFISAT.

The protein belongs to the bacterial CoaD family. In terms of assembly, homohexamer. Requires Mg(2+) as cofactor.

Its subcellular location is the cytoplasm. The catalysed reaction is (R)-4'-phosphopantetheine + ATP + H(+) = 3'-dephospho-CoA + diphosphate. It functions in the pathway cofactor biosynthesis; coenzyme A biosynthesis; CoA from (R)-pantothenate: step 4/5. Its function is as follows. Reversibly transfers an adenylyl group from ATP to 4'-phosphopantetheine, yielding dephospho-CoA (dPCoA) and pyrophosphate. The protein is Phosphopantetheine adenylyltransferase of Aromatoleum aromaticum (strain DSM 19018 / LMG 30748 / EbN1) (Azoarcus sp. (strain EbN1)).